The chain runs to 317 residues: 8-oxo-(d)GTP phosphatase (317 aa).

The region spanning 15-148 is the Nudix hydrolase domain; it reads RIVYAAGAVL…DRKVLCRFAK (134 aa). Substrate-binding positions include 43 to 46, Asp-48, and 53 to 55; these read RPRY and KGK. Lys-53, Glu-69, and Glu-73 together coordinate Mg(2+). The Nudix box motif lies at 54–75; the sequence is GKVDPGETAPVGAVREILEETG. Residues Tyr-89, Lys-99, Glu-118, and Tyr-136 each coordinate substrate. A Mg(2+)-binding site is contributed by Glu-118.

It belongs to the Nudix hydrolase family. Requires Mg(2+) as cofactor.

The enzyme catalyses 8-oxo-dGTP + H2O = 8-oxo-dGDP + phosphate + H(+). It carries out the reaction 8-oxo-GTP + H2O = 8-oxo-GDP + phosphate + H(+). Functionally, catalyzes the conversion of 8-oxo-dGTP to 8-oxo-dGDP, and 8-oxo-GTP to 8-oxo-GDP. In Mycobacterium tuberculosis (strain CDC 1551 / Oshkosh), this protein is 8-oxo-(d)GTP phosphatase.